The sequence spans 211 residues: Probable GTP-binding protein EngB (211 aa).

The EngB-type G domain occupies 30-204; the sequence is EGFEVAFAGR…YTVLADWMEL (175 aa). Residues 38–45, 64–68, 82–85, 149–152, and 182–185 each bind GTP; these read GRSNAGKS, GRTQL, DLPG, TKAD, and LFSA. Mg(2+)-binding residues include Ser45 and Thr66.

This sequence belongs to the TRAFAC class TrmE-Era-EngA-EngB-Septin-like GTPase superfamily. EngB GTPase family. Mg(2+) serves as cofactor.

Necessary for normal cell division and for the maintenance of normal septation. This chain is Probable GTP-binding protein EngB, found in Pseudomonas savastanoi pv. phaseolicola (strain 1448A / Race 6) (Pseudomonas syringae pv. phaseolicola (strain 1448A / Race 6)).